A 347-amino-acid polypeptide reads, in one-letter code: Phosphoribosylformylglycinamidine cyclo-ligase (347 aa).

It belongs to the AIR synthase family.

Its subcellular location is the cytoplasm. The enzyme catalyses 2-formamido-N(1)-(5-O-phospho-beta-D-ribosyl)acetamidine + ATP = 5-amino-1-(5-phospho-beta-D-ribosyl)imidazole + ADP + phosphate + H(+). It functions in the pathway purine metabolism; IMP biosynthesis via de novo pathway; 5-amino-1-(5-phospho-D-ribosyl)imidazole from N(2)-formyl-N(1)-(5-phospho-D-ribosyl)glycinamide: step 2/2. The protein is Phosphoribosylformylglycinamidine cyclo-ligase of Bacillus cytotoxicus (strain DSM 22905 / CIP 110041 / 391-98 / NVH 391-98).